We begin with the raw amino-acid sequence, 398 residues long: MASNDKGLEEIPDNQIESNYDEITDSFDAMNLRAELLRGVYAYGFERPSAIQQRAIMPVIKGSDVIAQAQSGTGKTATFSISALQKVDTNLKACQALILAPTRELAQQIQKVVVAIGDFMSVECHACIGGTNVREDIKALNDGPQVVVGTPGRVHDMIQRRVLKTDQMKMFVLDEADEMLSRGFTEQIYDIFQFLPQSTQVVLLSATMPQDVLDVTTKFMRDPVRILVKKAELTLEGIKQFYIAVEKEEWKLDTLSDLYETVTITQAVIFCNTRRKVDWLTDKLIARDFTVSAMHGEMEQNQRDVIMKEFRSGSSRVLIATDLLARGIDVQQVSLVINYDLPANRENYIHRIGRGGRFGRKGVAINFVTADDVRMMREIEQFYSTQIEEMPMNVADLI.

The Q motif motif lies at 25–53; that stretch reads DSFDAMNLRAELLRGVYAYGFERPSAIQQ. Residues 56 to 226 enclose the Helicase ATP-binding domain; the sequence is IMPVIKGSDV…TKFMRDPVRI (171 aa). 69–76 contacts ATP; sequence AQSGTGKT. The short motif at 174-177 is the DEAD box element; sequence DEAD. In terms of domain architecture, Helicase C-terminal spans 237–398; it reads GIKQFYIAVE…EMPMNVADLI (162 aa).

It belongs to the DEAD box helicase family. eIF4A subfamily. Component of the eIF4F complex, which composition varies with external and internal environmental conditions. It is composed of at least eIF4A, eIF4E and eIF4G.

Its subcellular location is the cytoplasm. It catalyses the reaction ATP + H2O = ADP + phosphate + H(+). ATP-dependent RNA helicase which is a subunit of the eIF4F complex involved in cap recognition and is required for mRNA binding to ribosome. In the current model of translation initiation, eIF4A unwinds RNA secondary structures in the 5'-UTR of mRNAs which is necessary to allow efficient binding of the small ribosomal subunit, and subsequent scanning for the initiator codon. This Coccidioides immitis (strain RS) (Valley fever fungus) protein is ATP-dependent RNA helicase eIF4A (TIF1).